The following is a 303-amino-acid chain: tRNA pseudouridine synthase B (303 aa).

Asp-47 acts as the Nucleophile in catalysis.

Belongs to the pseudouridine synthase TruB family. Type 1 subfamily.

It catalyses the reaction uridine(55) in tRNA = pseudouridine(55) in tRNA. In terms of biological role, responsible for synthesis of pseudouridine from uracil-55 in the psi GC loop of transfer RNAs. The polypeptide is tRNA pseudouridine synthase B (Legionella pneumophila (strain Lens)).